The following is a 208-amino-acid chain: Ribosomal RNA small subunit methyltransferase G (208 aa).

S-adenosyl-L-methionine is bound by residues Gly-78, Phe-83, 101–103, 129–130, and Arg-142; these read ERS and IE.

Belongs to the methyltransferase superfamily. RNA methyltransferase RsmG family.

It is found in the cytoplasm. In terms of biological role, specifically methylates the N7 position of a guanine in 16S rRNA. This chain is Ribosomal RNA small subunit methyltransferase G, found in Borreliella burgdorferi (strain ATCC 35210 / DSM 4680 / CIP 102532 / B31) (Borrelia burgdorferi).